The primary structure comprises 260 residues: Purine nucleoside phosphorylase XF_0940 (260 aa).

H79, C120, and H137 together coordinate Zn(2+).

It belongs to the purine nucleoside phosphorylase YfiH/LACC1 family. As to quaternary structure, homodimer. It depends on Cu(2+) as a cofactor. Zn(2+) is required as a cofactor.

It catalyses the reaction adenosine + phosphate = alpha-D-ribose 1-phosphate + adenine. The enzyme catalyses S-methyl-5'-thioadenosine + phosphate = 5-(methylsulfanyl)-alpha-D-ribose 1-phosphate + adenine. It carries out the reaction inosine + phosphate = alpha-D-ribose 1-phosphate + hypoxanthine. The catalysed reaction is adenosine + H2O + H(+) = inosine + NH4(+). Functionally, purine nucleoside enzyme that catalyzes the phosphorolysis of adenosine and inosine nucleosides, yielding D-ribose 1-phosphate and the respective free bases, adenine and hypoxanthine. Also catalyzes the phosphorolysis of S-methyl-5'-thioadenosine into adenine and S-methyl-5-thio-alpha-D-ribose 1-phosphate. Also has adenosine deaminase activity. This Xylella fastidiosa (strain 9a5c) protein is Purine nucleoside phosphorylase XF_0940.